The sequence spans 328 residues: Glycerol-3-phosphate dehydrogenase [NAD(P)+] (328 aa).

Residues W15, R35, and K108 each coordinate NADPH. K108, G136, and S138 together coordinate sn-glycerol 3-phosphate. A140 serves as a coordination point for NADPH. Sn-glycerol 3-phosphate is bound by residues K191, D244, S254, R255, and N256. The active-site Proton acceptor is the K191. R255 contacts NADPH. NADPH contacts are provided by L275 and E277.

It belongs to the NAD-dependent glycerol-3-phosphate dehydrogenase family.

The protein resides in the cytoplasm. The enzyme catalyses sn-glycerol 3-phosphate + NAD(+) = dihydroxyacetone phosphate + NADH + H(+). The catalysed reaction is sn-glycerol 3-phosphate + NADP(+) = dihydroxyacetone phosphate + NADPH + H(+). It participates in membrane lipid metabolism; glycerophospholipid metabolism. Functionally, catalyzes the reduction of the glycolytic intermediate dihydroxyacetone phosphate (DHAP) to sn-glycerol 3-phosphate (G3P), the key precursor for phospholipid synthesis. This is Glycerol-3-phosphate dehydrogenase [NAD(P)+] from Azorhizobium caulinodans (strain ATCC 43989 / DSM 5975 / JCM 20966 / LMG 6465 / NBRC 14845 / NCIMB 13405 / ORS 571).